A 293-amino-acid chain; its full sequence is Excinuclease cho (293 aa).

A GIY-YIG domain is found at 33 to 108 (ALPGVYIFHS…IKEQQPLFNK (76 aa)).

In terms of biological role, incises the DNA at the 3' side of a lesion during nucleotide excision repair. Incises the DNA farther away from the lesion than UvrC. Not able to incise the 5' site of a lesion. When a lesion remains because UvrC is not able to induce the 3' incision, Cho incises the DNA. Then UvrC makes the 5' incision. The combined action of Cho and UvrC broadens the substrate range of nucleotide excision repair. The polypeptide is Excinuclease cho (cho) (Salmonella typhimurium (strain LT2 / SGSC1412 / ATCC 700720)).